Here is a 167-residue protein sequence, read N- to C-terminus: Multifunctional Ser/Thr-tRNA deacylase ProXp-y (167 aa).

Its subcellular location is the cytoplasm. It carries out the reaction L-seryl-tRNA(Lys) + H2O = tRNA(Lys) + L-serine. It catalyses the reaction L-threonyl-tRNA(Lys) + H2O = tRNA(Lys) + L-threonine. The enzyme catalyses L-homoseryl-tRNA(Lys) + H2O = tRNA(Lys) + L-homoserine + H(+). The catalysed reaction is L-seryl-tRNA(Ala) + H2O = tRNA(Ala) + L-serine. It carries out the reaction L-homoseryl-tRNA(Ser) + H2O = tRNA(Ser) + L-homoserine + H(+). It catalyses the reaction L-seryl-tRNA(Thr) + H2O = tRNA(Thr) + L-serine. The enzyme catalyses L-threonyl-tRNA(Ile) + H2O = tRNA(Ile) + L-threonine. The catalysed reaction is L-threonyl-tRNA(Val) + H2O = tRNA(Val) + L-threonine. It carries out the reaction L-threonyl-tRNA(Ser) + H2O = tRNA(Ser) + L-threonine. In terms of biological role, an aminoacyl-tRNA editing enzyme that deacylates Ser-tRNA and/or Thr-tRNA mischarged by lysyl-tRNA synthetase (LysRS), threonyl-tRNA synthetase (ThrRS), seryl-tRNA synthetase (SerRS), alanyl-tRNA synthetase (AlaRS), valyl-tRNA synthetase (ValRS) and isoleucyl-tRNA synthetase (IleRS) in vitro. Also deacylates mischarged Hse-tRNA(Lys) and Hse-tRNA(Ser), and cognate Ser-tRNA(Ser) and Thr-tRNA(Thr) in vitro. The presence of cognate ThrRS abolishes the Thr-tRNA(Thr) deacylase activity, hence this activity is not applicable physiologically. Not able to remove the amino acid moiety from cognate Val-tRNA(Val), Ile-tRNA(Ile), Lys-tRNA(Lys), Ala-tRNA(Ala) or Pro-tRNA(Pro), or from incorrectly charged Ala-tRNA(Pro), Cys-tRNA(Pro) or Leu-tRNA(Pro) in vitro. May be required in vivo to prevent mistranslation and to maintain growth when the error prone stress-inducible lysyl-tRNA synthetase (LysU) is expressed under environmental pressure. This is Multifunctional Ser/Thr-tRNA deacylase ProXp-y from Escherichia coli O157:H7.